The following is a 747-amino-acid chain: Protein FAM83C (747 aa).

The DUF1669 stretch occupies residues 1–309 (MFGGPGPGVL…LYAESQPVEG (309 aa)). 7 disordered regions span residues 322–352 (LRPPPVALAFRPDVPSPTSSLPSSTSLSSIK), 374–412 (TGVVSSSLGPARREASGQPSLHRQLSDPNHGSPPGLYRA), 462–484 (LSRFPENGLPGSQEPSPLRGRWV), 517–550 (AREVGDPDSGVTPNSGPLRPGEQAPEDRRLSPSQ), 588–633 (NQSR…LGHS), 646–672 (GEGPGPNGLPISSPARTAGAGSGDEKR), and 692–715 (ARQGTEPGGPKGGHLNGGNSDLVR). Residues 328 to 350 (ALAFRPDVPSPTSSLPSSTSLSS) show a composition bias toward low complexity. Residues 390-402 (GQPSLHRQLSDPN) are compositionally biased toward polar residues. Gly residues predominate over residues 697-707 (EPGGPKGGHLN).

This sequence belongs to the FAM83 family. May interact with RAF1. Post-translationally, phosphorylated in vitro by CSNK1A1.

The protein localises to the cytoplasm. Functionally, may play a role in MAPK signaling. The polypeptide is Protein FAM83C (Homo sapiens (Human)).